The chain runs to 226 residues: Lipoprotein-releasing system ATP-binding protein LolD (226 aa).

Residues 5-225 form the ABC transporter domain; that stretch reads LELVEIERHF…TLKEKKIVEL (221 aa). 41–48 contributes to the ATP binding site; sequence APSGAGKS.

The protein belongs to the ABC transporter superfamily. Lipoprotein translocase (TC 3.A.1.125) family. As to quaternary structure, the complex is composed of two ATP-binding proteins (LolD) and two transmembrane proteins (LolC and LolE).

It localises to the cell inner membrane. Part of the ABC transporter complex LolCDE involved in the translocation of mature outer membrane-directed lipoproteins, from the inner membrane to the periplasmic chaperone, LolA. Responsible for the formation of the LolA-lipoprotein complex in an ATP-dependent manner. This chain is Lipoprotein-releasing system ATP-binding protein LolD, found in Bartonella quintana (strain Toulouse) (Rochalimaea quintana).